A 134-amino-acid chain; its full sequence is Phosphoribosyl-AMP cyclohydrolase (134 aa).

Asp-80 lines the Mg(2+) pocket. Cys-81 provides a ligand contact to Zn(2+). Residues Asp-82 and Asp-84 each coordinate Mg(2+). Cys-98 and Cys-105 together coordinate Zn(2+).

It belongs to the PRA-CH family. As to quaternary structure, homodimer. Mg(2+) is required as a cofactor. Requires Zn(2+) as cofactor.

The protein resides in the cytoplasm. It carries out the reaction 1-(5-phospho-beta-D-ribosyl)-5'-AMP + H2O = 1-(5-phospho-beta-D-ribosyl)-5-[(5-phospho-beta-D-ribosylamino)methylideneamino]imidazole-4-carboxamide. Its pathway is amino-acid biosynthesis; L-histidine biosynthesis; L-histidine from 5-phospho-alpha-D-ribose 1-diphosphate: step 3/9. Functionally, catalyzes the hydrolysis of the adenine ring of phosphoribosyl-AMP. The protein is Phosphoribosyl-AMP cyclohydrolase of Bordetella bronchiseptica (strain ATCC BAA-588 / NCTC 13252 / RB50) (Alcaligenes bronchisepticus).